Here is a 261-residue protein sequence, read N- to C-terminus: DNA repair protein RecO (261 aa).

This sequence belongs to the RecO family.

Functionally, involved in DNA repair and RecF pathway recombination. The protein is DNA repair protein RecO of Gloeobacter violaceus (strain ATCC 29082 / PCC 7421).